The primary structure comprises 177 residues: Large ribosomal subunit protein uL10 (177 aa).

This sequence belongs to the universal ribosomal protein uL10 family. As to quaternary structure, part of the ribosomal stalk of the 50S ribosomal subunit. The N-terminus interacts with L11 and the large rRNA to form the base of the stalk. The C-terminus forms an elongated spine to which L12 dimers bind in a sequential fashion forming a multimeric L10(L12)X complex.

Forms part of the ribosomal stalk, playing a central role in the interaction of the ribosome with GTP-bound translation factors. This Xanthomonas campestris pv. campestris (strain 8004) protein is Large ribosomal subunit protein uL10.